The sequence spans 525 residues: Glutamate--cysteine ligase (525 aa).

It belongs to the glutamate--cysteine ligase type 1 family. Type 1 subfamily.

The catalysed reaction is L-cysteine + L-glutamate + ATP = gamma-L-glutamyl-L-cysteine + ADP + phosphate + H(+). It functions in the pathway sulfur metabolism; glutathione biosynthesis; glutathione from L-cysteine and L-glutamate: step 1/2. This is Glutamate--cysteine ligase from Hahella chejuensis (strain KCTC 2396).